The sequence spans 564 residues: Asparagine synthetase domain-containing protein CG17486 (564 aa).

Cysteine 2 functions as the Nucleophile in the catalytic mechanism. In terms of domain architecture, Glutamine amidotransferase type-2 spans 2-180 (CGIFCSVVNN…PLGLFRVKLN (179 aa)). The region spanning 280-541 (PFCRLCMQKL…GLRDVVFLKK (262 aa)) is the Asparagine synthetase domain.

This is Asparagine synthetase domain-containing protein CG17486 from Drosophila melanogaster (Fruit fly).